The sequence spans 303 residues: Recombination-associated protein RdgC (303 aa).

This sequence belongs to the RdgC family.

Its subcellular location is the cytoplasm. The protein localises to the nucleoid. Functionally, may be involved in recombination. This is Recombination-associated protein RdgC from Shewanella sediminis (strain HAW-EB3).